A 192-amino-acid polypeptide reads, in one-letter code: E3 ubiquitin-protein ligase RNF185 (192 aa).

Over residues 1 to 27 (MASKGPSASASPENSSAGGPSGSSNGA) the composition is skewed to low complexity. The segment at 1-30 (MASKGPSASASPENSSAGGPSGSSNGAGES) is disordered. Residues 1–130 (MASKGPSASA…GGFQGFGFGD (130 aa)) lie on the Cytoplasmic side of the membrane. The required for ubiquitin ligase activity and protection against ER stress-induced cell death stretch occupies residues 29–80 (ESGGQDSTFECNICLDTAKDAVISLCGHLFCWPCLHQWLETRPNRQVCPVCK). Residues 39-80 (CNICLDTAKDAVISLCGHLFCWPCLHQWLETRPNRQVCPVCK) form an RING-type zinc finger. The segment at 90–123 (PLYGRGSTGQQDPREKTPPRPQGQRPEPENRGGF) is disordered. Residues 131 to 151 (GGFQMSFGIGAFPFGIFATAF) traverse the membrane as a helical segment. The Mitochondrial intermembrane segment spans residues 152-171 (NINDGRPPPAVPGTPQYVDE). A helical membrane pass occupies residues 172–192 (QFLSRLFLFVALVIMFWLLIA).

In terms of assembly, interacts with ATG5 and BNIP1. Ubiquitously expressed.

It localises to the mitochondrion outer membrane. The protein localises to the endoplasmic reticulum membrane. The catalysed reaction is S-ubiquitinyl-[E2 ubiquitin-conjugating enzyme]-L-cysteine + [acceptor protein]-L-lysine = [E2 ubiquitin-conjugating enzyme]-L-cysteine + N(6)-ubiquitinyl-[acceptor protein]-L-lysine.. It functions in the pathway protein modification; protein ubiquitination. Functionally, E3 ubiquitin-protein ligase that regulates selective mitochondrial autophagy by mediating 'Lys-63'-linked polyubiquitination of BNIP1. Acts in the endoplasmic reticulum (ER)-associated degradation (ERAD) pathway, which targets misfolded proteins that accumulate in the endoplasmic reticulum (ER) for ubiquitination and subsequent proteasome-mediated degradation. Protects cells from ER stress-induced apoptosis. Responsible for the cotranslational ubiquitination and degradation of CFTR in the ERAD pathway. Also acts as a regulator of the innate antiviral response by catalyzing 'Lys-27'-linked polyubiquitination of CGAS at 'Lys-173' and 'Lys-384', thereby promoting CGAS cyclic GMP-AMP synthase activity. Preferentially associates with the E2 enzymes UBE2J1 and UBE2J2. This Homo sapiens (Human) protein is E3 ubiquitin-protein ligase RNF185.